The primary structure comprises 193 residues: Probable nicotinate-nucleotide adenylyltransferase (193 aa).

This sequence belongs to the NadD family.

It catalyses the reaction nicotinate beta-D-ribonucleotide + ATP + H(+) = deamido-NAD(+) + diphosphate. It functions in the pathway cofactor biosynthesis; NAD(+) biosynthesis; deamido-NAD(+) from nicotinate D-ribonucleotide: step 1/1. Functionally, catalyzes the reversible adenylation of nicotinate mononucleotide (NaMN) to nicotinic acid adenine dinucleotide (NaAD). This Endomicrobium trichonymphae protein is Probable nicotinate-nucleotide adenylyltransferase.